Here is a 1173-residue protein sequence, read N- to C-terminus: DNA polymerase catalytic subunit (1173 aa).

2 disordered regions span residues 554–625 and 1123–1144; these read PSLP…SASG and EGPG…PPRK. Residues 564–578 are compositionally biased toward gly residues; that stretch reads GGDGAGLEGGDGGTA. A compositionally biased stretch (acidic residues) spans 591–606; sequence DGEDEDDPEGGDEGEN. Residues 607-618 show a composition bias toward basic and acidic residues; it reads GECRENGLEKEG. Gly residues predominate over residues 1123–1138; the sequence is EGPGRGEGLGVGGGEG.

It belongs to the DNA polymerase type-B family.

The protein localises to the host nucleus. The catalysed reaction is DNA(n) + a 2'-deoxyribonucleoside 5'-triphosphate = DNA(n+1) + diphosphate. The chain is DNA polymerase catalytic subunit (UL54) from Rattus.